Consider the following 65-residue polypeptide: Muscarinic toxin-like protein 3 (65 aa).

Disulfide bonds link cysteine 3/cysteine 24, cysteine 17/cysteine 41, cysteine 45/cysteine 57, and cysteine 58/cysteine 63.

As to quaternary structure, homodimer; non-covalently linked. In terms of tissue distribution, expressed by the venom gland.

It localises to the secreted. Antagonist of muscle and neuronal nicotinic acetylcholine receptors (nAChR) with highest affinity for neuronal alpha-7/CHRNA7 nAChRs. This Naja kaouthia (Monocled cobra) protein is Muscarinic toxin-like protein 3.